Consider the following 280-residue polypeptide: Hydroxyethylthiazole kinase (280 aa).

Substrate is bound at residue Met58. Arg129 contributes to the ATP binding site. Ala206 lines the substrate pocket.

The protein belongs to the Thz kinase family. The cofactor is Mg(2+).

It carries out the reaction 5-(2-hydroxyethyl)-4-methylthiazole + ATP = 4-methyl-5-(2-phosphooxyethyl)-thiazole + ADP + H(+). Its pathway is cofactor biosynthesis; thiamine diphosphate biosynthesis; 4-methyl-5-(2-phosphoethyl)-thiazole from 5-(2-hydroxyethyl)-4-methylthiazole: step 1/1. Functionally, thiazole kinase involved in thiamine salvage pathway. This is Hydroxyethylthiazole kinase (THIM) from Zea mays (Maize).